The primary structure comprises 89 residues: UPF0223 protein BCB4264_A4064 (89 aa).

The protein belongs to the UPF0223 family.

In Bacillus cereus (strain B4264), this protein is UPF0223 protein BCB4264_A4064.